Consider the following 351-residue polypeptide: 5-deoxyribose 1-phosphate isomerase (351 aa).

Substrate-binding positions include 48–50 (RGA), Arg-91, and Gln-198. Asp-239 functions as the Proton donor in the catalytic mechanism. 249–250 (NK) serves as a coordination point for substrate.

The protein belongs to the EIF-2B alpha/beta/delta subunits family. DrdI subfamily.

The catalysed reaction is 5-deoxy-alpha-D-ribose 1-phosphate = 5-deoxy-D-ribulose 1-phosphate. It functions in the pathway carbohydrate degradation. Functionally, catalyzes the isomerization of 5-deoxy-alpha-D-ribose 1-phosphate to 5-deoxy-D-ribulose 1-phosphate, as part of a 5-deoxyribose salvage pathway that recycles this toxic radical SAM enzyme by-product to mainstream metabolites. The sequence is that of 5-deoxyribose 1-phosphate isomerase from Moorella thermoacetica (strain ATCC 39073 / JCM 9320).